Here is a 125-residue protein sequence, read N- to C-terminus: Multifunctional methyltransferase subunit TRM112-like protein (125 aa).

The TRM112 domain maps to 2 to 119 (KLLTHNLLSS…SRGIPNMLLS (118 aa)). Residues Ser-119 and Ser-125 each carry the phosphoserine modification.

This sequence belongs to the TRM112 family. As to quaternary structure, part of the heterodimeric BUD23-TRM112 methyltransferase complex; this heterodimerization is necessary for the metabolic stability and activity of the catalytic subunit BUD23. Part of the heterodimeric N6AMT1-TRM112 methyltransferase complex; this heterodimerization is necessary for S-adenosyl-L-methionine-binding to N6AMT1/HEMK2. Part of the heterodimeric ALKBH8-TRM112 methyltransferase complex. Part of the heterodimeric METTL5-TRM112 methyltransferase complex; this heterodimerization is necessary for the stability of the catalytic subunit METTL5. Part of the heterodimeric THUMPD3-TRM112 methyltransferase complex; this complex forms an active tRNA methyltransferase, where TRMT112 acts as an activator of the catalytic subunit THUMPD3. Part of the heterodimeric THUMPD2-TRM112 methyltransferase complex; this complex forms an active tRNA methyltransferase, where TRMT112 acts as an activator of the catalytic subunit THUMPD2. Part of the heterodimeric TRMT11-TRM112 methyltransferase complex; this complex forms an active tRNA methyltransferase, where TRMT112 acts as an activator of the catalytic subunit TRMT11.

It is found in the nucleus. It localises to the nucleoplasm. The protein localises to the cytoplasm. The protein resides in the perinuclear region. Acts as an activator of both rRNA/tRNA and protein methyltransferases. Together with methyltransferase BUD23, methylates the N(7) position of a guanine in 18S rRNA. The heterodimer with N6AMT1/HEMK2 catalyzes N5-methylation of ETF1 on 'Gln-185', using S-adenosyl L-methionine as methyl donor. The heterodimer with N6AMT1/HEMK2 also monomethylates 'Lys-12' of histone H4 (H4K12me1). The heterodimer with ALKBH8 catalyzes the methylation of 5-carboxymethyl uridine to 5-methylcarboxymethyl uridine at the wobble position of the anticodon loop in target tRNA species. Together with methyltransferase THUMPD3, catalyzes the formation of N(2)-methylguanosine at position 6 in a broad range of tRNA substrates and at position 7 of tRNA(Trp). Involved in the pre-rRNA processing steps leading to small-subunit rRNA production. Together with methyltransferase METTL5, specifically methylates the 6th position of adenine in position 1832 of 18S rRNA. The chain is Multifunctional methyltransferase subunit TRM112-like protein from Homo sapiens (Human).